The primary structure comprises 208 residues: Small ribosomal subunit protein uS4 (208 aa).

An S4 RNA-binding domain is found at 98–160; sequence RRLDNVVYRM…SKNNVQIQRA (63 aa).

The protein belongs to the universal ribosomal protein uS4 family. As to quaternary structure, part of the 30S ribosomal subunit. Contacts protein S5. The interaction surface between S4 and S5 is involved in control of translational fidelity.

One of the primary rRNA binding proteins, it binds directly to 16S rRNA where it nucleates assembly of the body of the 30S subunit. In terms of biological role, with S5 and S12 plays an important role in translational accuracy. The chain is Small ribosomal subunit protein uS4 from Nautilia profundicola (strain ATCC BAA-1463 / DSM 18972 / AmH).